The following is a 147-amino-acid chain: uncharacterized protein (147 aa).

2 4Fe-4S ferredoxin-type domains span residues 80-109 and 110-141; these read WYPK…AENG and KVVV…FPDE. 8 residues coordinate [4Fe-4S] cluster: Cys-89, Cys-92, Cys-95, Cys-99, Cys-119, Cys-123, Cys-126, and Cys-130.

[4Fe-4S] cluster serves as cofactor.

This is an uncharacterized protein from Methanocaldococcus jannaschii (strain ATCC 43067 / DSM 2661 / JAL-1 / JCM 10045 / NBRC 100440) (Methanococcus jannaschii).